The sequence spans 178 residues: Disulfide bond formation protein B (178 aa).

The Cytoplasmic portion of the chain corresponds to 1–14; sequence MLSFFKTLSMGRSG. Residues 15–31 form a helical membrane-spanning segment; it reads WLLLAFSALVLELVALY. Topologically, residues 32–49 are periplasmic; it reads FQYGMQLQPCVMCVYERV. A disulfide bridge connects residues C41 and C44. A helical transmembrane segment spans residues 50–65; it reads ALGGILFAGIIGAIAP. At 66–72 the chain is on the cytoplasmic side; sequence SSWFFRF. The chain crosses the membrane as a helical span at residues 73–90; it reads LGIIIGLGASVKGFLLAL. Residues 91-145 lie on the Periplasmic side of the membrane; sequence KHVDYQLNPAPWNQCAYLPEFPQTLPLDQWFPYLFKPIGSCSDIQWSFLGFSMAQ. Cysteines 105 and 131 form a disulfide. A helical membrane pass occupies residues 146-164; sequence WILVMFAFYSILLAIILIS. At 165–178 the chain is on the cytoplasmic side; the sequence is QVKAGKPKHREIFR.

It belongs to the DsbB family.

The protein resides in the cell inner membrane. Required for disulfide bond formation in some periplasmic proteins. Acts by oxidizing the DsbA protein. The sequence is that of Disulfide bond formation protein B from Mannheimia succiniciproducens (strain KCTC 0769BP / MBEL55E).